The sequence spans 312 residues: tRNA pseudouridine synthase B (312 aa).

Asp47 acts as the Nucleophile in catalysis.

This sequence belongs to the pseudouridine synthase TruB family. Type 1 subfamily.

It carries out the reaction uridine(55) in tRNA = pseudouridine(55) in tRNA. Its function is as follows. Responsible for synthesis of pseudouridine from uracil-55 in the psi GC loop of transfer RNAs. The sequence is that of tRNA pseudouridine synthase B from Vibrio cholerae serotype O1 (strain M66-2).